The primary structure comprises 228 residues: DNA repair protein RecO (228 aa).

The protein belongs to the RecO family.

Involved in DNA repair and RecF pathway recombination. This is DNA repair protein RecO from Mannheimia succiniciproducens (strain KCTC 0769BP / MBEL55E).